The primary structure comprises 254 residues: 3-oxo-5-alpha-steroid 4-dehydrogenase 2 (254 aa).

4 helical membrane passes run 8–28 (VPVL…LCLG), 72–92 (PRSL…AHYF), 146–166 (FSFG…SDYT), and 206–226 (LATW…FLGM).

This sequence belongs to the steroid 5-alpha reductase family. In terms of tissue distribution, expressed in high levels in the prostate and many other androgen-sensitive tissues.

The protein localises to the microsome membrane. It localises to the endoplasmic reticulum membrane. It catalyses the reaction a 3-oxo-5alpha-steroid + NADP(+) = a 3-oxo-Delta(4)-steroid + NADPH + H(+). It carries out the reaction 17beta-hydroxy-5alpha-androstan-3-one + NADP(+) = testosterone + NADPH + H(+). The catalysed reaction is 5alpha-pregnane-3,20-dione + NADP(+) = progesterone + NADPH + H(+). Converts testosterone (T) into 5-alpha-dihydrotestosterone (DHT) and progesterone or corticosterone into their corresponding 5-alpha-3-oxosteroids. It plays a central role in sexual differentiation and androgen physiology. The polypeptide is 3-oxo-5-alpha-steroid 4-dehydrogenase 2 (Srd5a2) (Rattus norvegicus (Rat)).